Here is a 190-residue protein sequence, read N- to C-terminus: Venom nerve growth factor (190 aa).

The N-terminal stretch at 1 to 7 (FLIGIWA) is a signal peptide. Positions 8–111 (APKSEDNVPL…SLNRNIRAKR (104 aa)) are excised as a propeptide. A disulfide bridge connects residues cysteine 125 and cysteine 190. Asparagine 134 carries N-linked (GlcNAc...) asparagine glycosylation.

Belongs to the NGF-beta family. As to quaternary structure, homodimer; non-covalently linked. In terms of processing, glycosylated. Expressed by the venom gland.

The protein localises to the secreted. Functionally, nerve growth factor is important for the development and maintenance of the sympathetic and sensory nervous systems. It stimulates division and differentiation of sympathetic and embryonic sensory neurons as well as basal forebrain cholinergic neurons in the brain. Its relevance in the snake venom is not clear. However, it has been shown to inhibit metalloproteinase-dependent proteolysis of platelet glycoprotein Ib alpha, suggesting a metalloproteinase inhibition to prevent metalloprotease autodigestion and/or protection against prey proteases. Binds a lipid between the two protein chains in the homodimer. The lipid-bound form promotes histamine relase from mouse mast cells, contrary to the lipid-free form. This chain is Venom nerve growth factor, found in Agkistrodon contortrix contortrix (Southern copperhead).